Here is a 185-residue protein sequence, read N- to C-terminus: MLADILQEAEEKMKKAVEGLRRELASLRAGRANPALLEKVLVSYYGTPTPVNQLATVSSPEARLLVIQPWDRNILPEIEKAILKSDLGLTPSSDGTVIRITIPQLTEERRSELVKVARKKAEEFRVMVRNARREANDKLKASEKNKEASEDEVKRAQEKVQKTTDNYIQIIDKILATKEAEIMEV.

The disordered stretch occupies residues 135–159 (ANDKLKASEKNKEASEDEVKRAQEK).

This sequence belongs to the RRF family.

It is found in the cytoplasm. In terms of biological role, responsible for the release of ribosomes from messenger RNA at the termination of protein biosynthesis. May increase the efficiency of translation by recycling ribosomes from one round of translation to another. The sequence is that of Ribosome-recycling factor from Moorella thermoacetica (strain ATCC 39073 / JCM 9320).